Consider the following 129-residue polypeptide: UPF0325 protein ECA1027 (129 aa).

The protein belongs to the UPF0325 family.

The chain is UPF0325 protein ECA1027 from Pectobacterium atrosepticum (strain SCRI 1043 / ATCC BAA-672) (Erwinia carotovora subsp. atroseptica).